The following is a 2332-amino-acid chain: Genome polyprotein (2332 aa).

The region spanning 1-201 is the Peptidase C28 domain; that stretch reads MNTTNCFIAL…WKTQVQKKLK (201 aa). Residues 1–1480 are Cytoplasmic-facing; the sequence is MNTTNCFIAL…SFVKRAFKRL (1480 aa). Catalysis depends on for leader protease activity residues C51, H148, and D163. 2 disordered regions span residues 199 to 218 and 237 to 264; these read KLKG…QSGN and TQLG…TNTQ. The N-myristoyl glycine; by host moiety is linked to residue G202. Polar residues-rich tracts occupy residues 204–218 and 237–251; these read GQSS…QSGN and TQLG…SNEG. Residues 252–264 are compositionally biased toward low complexity; that stretch reads STDTTSTHTTNTQ. An antigenic epitope region spans residues 789 to 797; the sequence is ALLRAATYY. The Cell attachment site motif lies at 867–870; sequence RSGD. The SF3 helicase domain maps to 1189–1353; the sequence is NVHIANLCKV…DGYKINNKLD (165 aa). 1217–1224 lines the ATP pocket; sequence GKSGQGKS. The stretch at 1481–1501 is an intramembrane region; sequence KENFEIVALCLTLLANIVIMI. Residues 1502 to 2332 are Cytoplasmic-facing; it reads RETRKRQKMV…RWVNAVCGDA (831 aa). Basic and acidic residues-rich tracts occupy residues 1529–1538 and 1549–1563; these read KTLDEAEKNP and FRER…RDDV. The interval 1529 to 1588 is disordered; it reads KTLDEAEKNPLETSGASTVGFRERSLTGQKVRDDVSSEPAQPAEDQPQAEGPYSGPLERQ. O-(5'-phospho-RNA)-tyrosine occurs at positions 1581, 1604, and 1628. A Peptidase C3 domain is found at 1652-1848; the sequence is APPTDLQKMV…YCSCVSRSML (197 aa). Residue H1695 is the For protease 3C activity; Proton donor/acceptor of the active site. Active-site for protease 3C activity residues include D1733 and C1812. The Nuclear localization signal signature appears at 1878–1886; sequence MRKTKLAPT. In terms of domain architecture, RdRp catalytic spans 2096-2214; the sequence is RNVWDVDYSA…ASDYDLDFEA (119 aa). The For RdRp activity role is filled by D2200.

This sequence belongs to the picornaviruses polyprotein family. In terms of assembly, interacts with host ISG15. As to quaternary structure, interacts (via R-G-D motif) with host ITGAV/ITGB6. Interacts with host MAVS; this interaction inhibits binding of host TRAF3 to MAVS, thereby suppressing interferon-mediated responses. Forms homooligomers. In terms of assembly, homohexamer. Interacts with host VIM. Interacts with host BECN1. As to quaternary structure, interacts with host DCTN3. Interacts with RNA-dependent RNA polymerase; this interaction allows 3B-1 to binds 2 polymerases and act as a primer. It also allows the recruitment of the RNA-dependent RNA polymerase to host membranes. In terms of assembly, interacts with RNA-dependent RNA polymerase; this interaction allows 3B-2 to act as a primer. As to quaternary structure, interacts with RNA-dependent RNA polymerase; this interaction allows 3B-3 to act as a primer. Interacts with 3B-1; this interaction allows 3B-1 to binds 2 polymerases and act as a primer. It also allows the recruitment of the RNA-dependent RNA polymerase to host membranes. Interacts with 3B-2; this interaction allows 3B-2 to act as a primer. Interacts with 3B-3; this interaction allows 3B-3 to act as a primer. Removes six residues from its own C-terminus, generating sLb(pro). Post-translationally, specific enzymatic cleavages in vivo by the viral proteases yield a variety of precursors and mature proteins. The polyprotein seems to be cotranslationally cleaved at the 2A/2B junction by a ribosomal skip from one codon to the next without formation of a peptide bond. This process would release the L-P1-2A peptide from the translational complex. In terms of processing, during virion maturation, immature virions are rendered infectious following cleavage of VP0 into VP4 and VP2. This maturation seems to be an autocatalytic event triggered by the presence of RNA in the capsid and is followed by a conformational change of the particle. Myristoylation is required during RNA encapsidation and formation of the mature virus particle. Post-translationally, uridylylated by the polymerase and covalently linked to the 5'-end of genomic RNA. These uridylylated forms act as a nucleotide-peptide primer for the polymerase.

The protein localises to the host nucleus. Its subcellular location is the host cytoplasm. It localises to the virion. The protein resides in the host endoplasmic reticulum membrane. It is found in the host cytoplasmic vesicle membrane. It catalyses the reaction Autocatalytically cleaves itself from the polyprotein of the foot-and-mouth disease virus by hydrolysis of a Lys-|-Gly bond, but then cleaves host cell initiation factor eIF-4G at bonds -Gly-|-Arg- and -Lys-|-Arg-.. The catalysed reaction is a ribonucleoside 5'-triphosphate + H2O = a ribonucleoside 5'-diphosphate + phosphate + H(+). It carries out the reaction RNA(n) + a ribonucleoside 5'-triphosphate = RNA(n+1) + diphosphate. The enzyme catalyses Selective cleavage of Gln-|-Gly bond in the poliovirus polyprotein. In other picornavirus reactions Glu may be substituted for Gln, and Ser or Thr for Gly.. Its function is as follows. Autocatalytically cleaves itself from the polyprotein at the L/VP0 junction. Also cleaves the host translation initiation factors EIF4G1 and EIF4G3, in order to shut off the capped cellular mRNA transcription. Plays a role in counteracting host innate antiviral response using diverse mechanisms. Possesses a deubiquitinase activity acting on both 'Lys-48' and 'Lys-63'-linked polyubiquitin chains. In turn, inhibits the ubiquitination and subsequent activation of key signaling molecules of type I IFN response such as host RIGI, TBK1, TRAF3 and TRAF6. Inhibits host NF-kappa-B activity by inducing a decrease in RELA mRNA levels. Cleaves a peptide bond in the C-terminus of host ISG15, resulting in the damaging of this modifier that can no longer be attached to target proteins. Also cleaves host G3BP1 and G3BP2 in order to inhibit cytoplasmic stress granules assembly. In terms of biological role, lies on the inner surface of the capsid shell. After binding to the host receptor, the capsid undergoes conformational changes. Capsid protein VP4 is released, capsid protein VP1 N-terminus is externalized, and together, they shape a pore in the host membrane through which the viral genome is translocated into the host cell cytoplasm. After genome has been released, the channel shrinks. Forms an icosahedral capsid of pseudo T=3 symmetry with capsid proteins VP1 and VP3. The capsid is composed of 60 copies of each capsid protein organized in the form of twelve pentamers and encloses the viral positive strand RNA genome. Upon acidifcation in the endosome, dissociates into pentamers. Functionally, forms an icosahedral capsid of pseudo T=3 symmetry with capsid proteins VP2 and VP3. The capsid is composed of 60 copies of each capsid protein organized in the form of twelve pentamers and encloses the viral positive strand RNA genome. Mediates cell entry by attachment to an integrin receptor, usually host ITGAV/ITGB6. In addition, targets host MAVS to suppress type I IFN pathway. Upon acidifcation in the endosome, dissociates into pentamers. Its function is as follows. Forms an icosahedral capsid of pseudo T=3 symmetry with capsid proteins VP0 and VP3. The capsid is composed of 60 copies of each capsid protein organized in the form of twelve pentamers and encloses the viral positive strand RNA genome. In terms of biological role, mediates self-processing of the polyprotein by a translational effect termed 'ribosome skipping'. Mechanistically, 2A-mediated cleavage occurs between the C-terminal glycine and the proline of the downstream protein 2B. In the case of foot-and-mouth disease virus, the 2A oligopeptide is post-translationally 'trimmed' from the C-terminus of the upstream protein 1D by 3C proteinase. Plays an essential role in the virus replication cycle by acting as a viroporin. Creates a pore in the host endoplasmic reticulum and as a consequence releases Ca2+ in the cytoplasm of infected cell. In turn, high levels of cytoplasmic calcium may trigger membrane trafficking and transport of viral ER-associated proteins to viroplasms, sites of viral genome replication. Functionally, associates with and induces structural rearrangements of intracellular membranes. Triggers host autophagy by interacting with host BECN1 and thereby promotes viral replication. Participates in viral replication and interacts with host DHX9. Displays RNA-binding, nucleotide binding and NTPase activities. May play a role in virion morphogenesis and viral RNA encapsidation by interacting with the capsid protein VP3. Its function is as follows. Plays important roles in virus replication, virulence and host range. Cooperates with host DDX56 to inhibit IRF3 nuclear translocation and subsequent type I interferon production. In terms of biological role, covalently linked to the 5'-end of both the positive-strand and negative-strand genomic RNAs. Acts as a genome-linked replication primer. Covalently linked to the 5'-end0 of both the positive-strand and negative-strand genomic RNAs. Acts as a genome-linked replication primer. Functionally, cysteine protease that generates mature viral proteins from the precursor polyprotein. In addition to its proteolytic activity, binds to viral RNA and thus influences viral genome replication. RNA and substrate bind cooperatively to the protease. Its function is as follows. RNA-directed RNA polymerase 3D-POL replicates genomic and antigenomic RNA by recognizing replications specific signals. Covalently attaches UMP to a tyrosine of VPg, which is used to prime RNA synthesis. The positive stranded RNA genome is first replicated at virus induced membranous vesicles, creating a dsRNA genomic replication form. This dsRNA is then used as template to synthesize positive stranded RNA genomes. ss(+)RNA genomes are either translated, replicated or encapsidated. This Bos taurus (Bovine) protein is Genome polyprotein.